Reading from the N-terminus, the 132-residue chain is Glycine-rich protein 3 (132 aa).

The N-terminal stretch at 1–20 (MRYAVLLAVVLLLGAFTAEA) is a signal peptide.

Prismatic layer of shell (at protein level). Expressed primarily in the mantle with highest level in the mantle edge and lower level in the mantle pallium.

It localises to the secreted. The sequence is that of Glycine-rich protein 3 from Pinctada maxima (Silver-lipped pearl oyster).